The sequence spans 299 residues: tRNA dimethylallyltransferase (299 aa).

10 to 17 (GPTAVGKT) serves as a coordination point for ATP. 12–17 (TAVGKT) serves as a coordination point for substrate. An interaction with substrate tRNA region spans residues 35–38 (DSQQ).

Belongs to the IPP transferase family. In terms of assembly, monomer. Mg(2+) is required as a cofactor.

The catalysed reaction is adenosine(37) in tRNA + dimethylallyl diphosphate = N(6)-dimethylallyladenosine(37) in tRNA + diphosphate. In terms of biological role, catalyzes the transfer of a dimethylallyl group onto the adenine at position 37 in tRNAs that read codons beginning with uridine, leading to the formation of N6-(dimethylallyl)adenosine (i(6)A). The chain is tRNA dimethylallyltransferase from Streptococcus thermophilus (strain ATCC BAA-491 / LMD-9).